The chain runs to 390 residues: Chorismate synthase (390 aa).

Positions 39 and 45 each coordinate NADP(+). Residues 132-134 (RSS), 253-254 (NA), G298, 313-317 (KPIPT), and R339 contribute to the FMN site.

Belongs to the chorismate synthase family. Homotetramer. It depends on FMNH2 as a cofactor.

It carries out the reaction 5-O-(1-carboxyvinyl)-3-phosphoshikimate = chorismate + phosphate. It functions in the pathway metabolic intermediate biosynthesis; chorismate biosynthesis; chorismate from D-erythrose 4-phosphate and phosphoenolpyruvate: step 7/7. Catalyzes the anti-1,4-elimination of the C-3 phosphate and the C-6 proR hydrogen from 5-enolpyruvylshikimate-3-phosphate (EPSP) to yield chorismate, which is the branch point compound that serves as the starting substrate for the three terminal pathways of aromatic amino acid biosynthesis. This reaction introduces a second double bond into the aromatic ring system. The sequence is that of Chorismate synthase from Bacillus cytotoxicus (strain DSM 22905 / CIP 110041 / 391-98 / NVH 391-98).